The chain runs to 411 residues: Mitogen-activated protein kinase 8 (411 aa).

The region spanning 26-321 (YQNLKPIGSG…VDEALQHPYI (296 aa)) is the Protein kinase domain. ATP contacts are provided by residues 32–40 (IGSGAQGIV) and Lys-55. Cys-116 bears the S-nitrosocysteine; in inhibited form mark. Catalysis depends on Asp-151, which acts as the Proton acceptor. The residue at position 183 (Thr-183) is a Phosphothreonine; by MAP2K7. The TXY motif lies at 183–185 (TPY). The residue at position 185 (Tyr-185) is a Phosphotyrosine; by MAP2K4. The segment at 368–411 (KNGVIRGQPSPLGAAVINGSQHPVSSPSVNDMSSMSTDPTLASD) is disordered. A Phosphoserine modification is found at Ser-377. The span at 390-403 (PVSSPSVNDMSSMS) shows a compositional bias: low complexity.

The protein belongs to the protein kinase superfamily. CMGC Ser/Thr protein kinase family. MAP kinase subfamily. Forms a complex with MAPK8IP1 and ARHGEF28. Found in a complex with SH3RF1, RAC1, MAP3K11/MLK3, MAP2K7/MKK7 and MAPK8IP1/JIP1. Found in a complex with SH3RF1, RAC2, MAP3K7/TAK1, MAP2K7/MKK7, MAPK8IP1/JIP1 and MAPK9/JNK2. Binds to at least four scaffolding proteins, MAPK8IP1/JIP-1, MAPK8IP2/JIP-2, MAPK8IP3/JIP-3/JSAP1 and SPAG9/MAPK8IP4/JIP-4. These proteins also bind other components of the JNK signaling pathway. Interacts with TP53, WWOX. Interacts with JAMP. Interacts with NFATC4. Interacts (phosphorylated form) with NFE2; the interaction phosphorylates NFE2 in undifferentiated cells. Interacts with MECOM; regulates JNK signaling. Interacts with PIN1; this interaction mediates MAPK8 conformational changes leading to the binding of MAPK8 to its substrates. Interacts with HSF1 (via D domain and preferentially with hyperphosphorylated form); this interaction occurs under both normal growth conditions and immediately upon heat shock. Interacts with STMN2, STMN3 and STMN4. Interacts with GRIPAP1. Interacts with POU5F1; phosphorylates POU5F1 at 'Ser-347'. Interacts with HSF4. Requires Mg(2+) as cofactor. In terms of processing, dually phosphorylated on Thr-183 and Tyr-185 by MAP2K7 and MAP2K4, which activates the enzyme. Phosphorylated by TAOK2. Phosphorylated form is more concentrated at synapses than none-phosphorylated. Post-translationally, nitrosylated upon IFN-gamma-induced endogenous NO production, which inhibits the enzyme. May be phosphorylated at Thr-183 and Tyr-185 by MAP3K1/MEKK1.

Its subcellular location is the cytoplasm. It is found in the nucleus. The protein localises to the synapse. The enzyme catalyses L-seryl-[protein] + ATP = O-phospho-L-seryl-[protein] + ADP + H(+). The catalysed reaction is L-threonyl-[protein] + ATP = O-phospho-L-threonyl-[protein] + ADP + H(+). With respect to regulation, activated by threonine and tyrosine phosphorylation by either of two dual specificity kinases, MAP2K4 and MAP2K7. MAP2K4 shows a strong preference for Tyr-185 while MAP2K7 phosphorylates Tyr-183 preferentially. Inhibited by dual specificity phosphatases, such as DUSP1. Inhibited by SERPINB3. Inhibited by IFN-gamma-induced S-nitrosylation. Serine/threonine-protein kinase involved in various processes such as cell proliferation, differentiation, migration, transformation and programmed cell death. Extracellular stimuli such as pro-inflammatory cytokines or physical stress stimulate the stress-activated protein kinase/c-Jun N-terminal kinase (SAP/JNK) signaling pathway. In this cascade, two dual specificity kinases MAP2K4/MKK4 and MAP2K7/MKK7 phosphorylate and activate MAPK8/JNK1. In turn, MAPK8/JNK1 phosphorylates a number of transcription factors, primarily components of AP-1 such as JUN, JDP2 and ATF2 and thus regulates AP-1 transcriptional activity. Phosphorylates the replication licensing factor CDT1, inhibiting the interaction between CDT1 and the histone H4 acetylase HBO1 to replication origins. Loss of this interaction abrogates the acetylation required for replication initiation. Promotes stressed cell apoptosis by phosphorylating key regulatory factors including p53/TP53 and Yes-associates protein YAP1. In T-cells, MAPK8 and MAPK9 are required for polarized differentiation of T-helper cells into Th1 cells. Contributes to the survival of erythroid cells by phosphorylating the antagonist of cell death BAD upon EPO stimulation. Mediates starvation-induced BCL2 phosphorylation, BCL2 dissociation from BECN1, and thus activation of autophagy. Phosphorylates STMN2 and hence regulates microtubule dynamics, controlling neurite elongation in cortical neurons. In the developing brain, through its cytoplasmic activity on STMN2, negatively regulates the rate of exit from multipolar stage and of radial migration from the ventricular zone. Phosphorylates several other substrates including heat shock factor protein 4 (HSF4), the deacetylase SIRT1, ELK1, or the E3 ligase ITCH. Phosphorylates the CLOCK-BMAL1 heterodimer and plays a role in the regulation of the circadian clock. Phosphorylates the heat shock transcription factor HSF1, suppressing HSF1-induced transcriptional activity. Phosphorylates POU5F1, which results in the inhibition of POU5F1's transcriptional activity and enhances its proteasomal degradation. Phosphorylates JUND and this phosphorylation is inhibited in the presence of MEN1. In neurons, phosphorylates SYT4 which captures neuronal dense core vesicles at synapses. Phosphorylates EIF4ENIF1/4-ET in response to oxidative stress, promoting P-body assembly. Phosphorylates SIRT6 in response to oxidative stress, stimulating its mono-ADP-ribosyltransferase activity. Phosphorylates NLRP3, promoting assembly of the NLRP3 inflammasome. Phosphorylates ALKBH5 in response to reactive oxygen species (ROS), promoting ALKBH5 sumoylation and inactivation. This chain is Mitogen-activated protein kinase 8 (Mapk8), found in Rattus norvegicus (Rat).